The sequence spans 356 residues: Cyanide hydratase (356 aa).

In terms of domain architecture, CN hydrolase spans 6 to 285 (YKAAAVTSEP…DGLLFVDIDL (280 aa)). Catalysis depends on E46, which acts as the Proton acceptor. Residue K128 is part of the active site. Catalysis depends on C163, which acts as the Nucleophile.

This sequence belongs to the carbon-nitrogen hydrolase superfamily. Nitrilase family. As to quaternary structure, oligomer of dimers, forming left-handed helical fibers.

The enzyme catalyses formamide = hydrogen cyanide + H2O. Catalyzes the hydration of cyanide to formamide. Degradation of cyanide may be important for plant pathogenic fungi in infection of cyanogenic plants. The sequence is that of Cyanide hydratase from Leptosphaeria maculans (Blackleg fungus).